A 2871-amino-acid chain; its full sequence is MSCNGGSHPRINTLGRMIRAESGPDLRYEVTSGGGGTSRMYYSRRGVITDQNSDGYCQTGTMSRHQNQNTIQELLQNCSDCLMRAELIVQPELKYGDGIQLTRSRELDECFAQANDQMEILDSLIREMRQMGQPCDAYQKRLLQLQEQMRALYKAISVPRVRRASSKGGGGYTCQSGSGWDEFTKHVTSECLGWMRQQRAEMDMVAWGVDLASVEQHINSHRGIHNSIGDYRWQLDKIKADLREKSAIYQLEEEYENLLKASFERMDHLRQLQNIIQATSREIMWINDCEEEELLYDWSDKNTNIAQKQEAFSIRMSQLEVKEKELNKLKQESDQLVLNQHPASDKIEAYMDTLQTQWSWILQITKCIDVHLKENAAYFQFFEEAQSTEAYLKGLQDSIRKKYPCDKNMPLQHLLEQIKELEKEREKILEYKRQVQNLVNKSKKIVQLKPRNPDYRSNKPIILRALCDYKQDQKIVHKGDECILKDNNERSKWYVTGPGGVDMLVPSVGLIIPPPNPLAVDLSCKIEQYYEAILALWNQLYINMKSLVSWHYCMIDIEKIRAMTIAKLKTMRQEDYMKTIADLELHYQEFIRNSQGSEMFGDDDKRKIQSQFTDAQKHYQTLVIQLPGYPQHQTVTTTEITHHGTCQDVNHNKVIETNRENDKQETWMLMELQKIRRQIEHCEGRMTLKNLPLADQGSSHHITVKINELKSVQNDSQAIAEVLNQLKDMLANFRGSEKYCYLQNEVFGLFQKLENINGVTDGYLNSLCTVRALLQAILQTEDMLKVYEARLTEEETVCLDLDKVEAYRCGLKKIKNDLNLKKSLLATMKTELQKAQQIHSQTSQQYPLYDLDLGKFGEKVTQLTDRWQRIDKQIDFRLWDLEKQIKQLRNYRDNYQAFCKWLYDAKRRQDSLESMKFGDSNTVMRFLNEQKNLHSEISGKRDKSEEVQKIAELCANSIKDYELQLASYTSGLETLLNIPIKRTMIQSPSGVILQEAADVHARYIELLTRSGDYYRFLSEMLKSLEDLKLKNTKIEVLEEELRLARDANSENCNKNKFLDQNLQKYQAECSQFKAKLASLEELKRQAELDGKSAKQNLDKCYGQIKELNEKITRLTYEIEDEKRRRKSVEDRFDQQKNDYDQLQKARQCEKENLGWQKLESEKAIKEKEYEIERLRVLLQEEGTRKREYENELAKVRNHYNEEMSNLRNKYETEINITKTTIKEISMQKEDDSKNLRNQLDRLSRENRDLKDEIVRLNDSILQATEQRRRAEENALQQKACGSEIMQKKQHLEIELKQVMQQRSEDNARHKQSLEEAAKTIQDKNKEIERLKAEFQEEAKRRWEYENELSKVRNNYDEEIISLKNQFETEINITKTTIHQLTMQKEEDTSGYRAQIDNLTRENRSLSEEIKRLKNTLTQTTENLRRVEEDIQQQKATGSEVSQRKQQLEVELRQVTQMRTEESVRYKQSLDDAAKTIQDKNKEIERLKQLIDKETNDRKCLEDENARLQRVQYDLQKANSSATETINKLKVQEQELTRLRIDYERVSQERTVKDQDITRFQNSLKELQLQKQKVEEELNRLKRTASEDSCKRKKLEEELEGMRRSLKEQAIKITNLTQQLEQASIVKKRSEDDLRQQRDVLDGHLREKQRTQEELRRLSSEVEALRRQLLQEQESVKQAHLRNEHFQKAIEDKSRSLNESKIEIERLQSLTENLTKEHLMLEEELRNLRLEYDDLRRGRSEADSDKNATILELRSQLQISNNRTLELQGLINDLQRERENLRQEIEKFQKQALEASNRIQESKNQCTQVVQERESLLVKIKVLEQDKARLQRLEDELNRAKSTLEAETRVKQRLECEKQQIQNDLNQWKTQYSRKEEAIRKIESEREKSEREKNSLRSEIERLQAEIKRIEERCRRKLEDSTRETQSQLETERSRYQREIDKLRQRPYGSHRETQTECEWTVDTSKLVFDGLRKKVTAMQLYECQLIDKTTLDKLLKGKKSVEEVASEIQPFLRGAGSIAGASASPKEKYSLVEAKRKKLISPESTVMLLEAQAATGGIIDPHRNEKLTVDSAIARDLIDFDDRQQIYAAEKAITGFDDPFSGKTVSVSEAIKKNLIDRETGMRLLEAQIASGGVVDPVNSVFLPKDVALARGLIDRDLYRSLNDPRDSQKNFVDPVTKKKVSYVQLKERCRIEPHTGLLLLSVQKRSMSFQGIRQPVTVTELVDSGILRPSTVNELESGQISYDEVGERIKDFLQGSSCIAGIYNETTKQKLGIYEAMKIGLVRPGTALELLEAQAATGFIVDPVSNLRLPVEEAYKRGLVGIEFKEKLLSAERAVTGYNDPETGNIISLFQAMNKELIEKGHGIRLLEAQIATGGIIDPKESHRLPVDIAYKRGYFNEELSEILSDPSDDTKGFFDPNTEENLTYLQLKERCIKDEETGLCLLPLKEKKKQVQTSQKNTLRKRRVVIVDPETNKEMSVQEAYKKGLIDYETFKELCEQECEWEEITITGSDGSTRVVLVDRKTGSQYDIQDAIDKGLVDRKFFDQYRSGSLSLTQFADMISLKNGVGTSSSMGSGVSDDVFSSSRHESVSKISTISSVRNLTIRSSSFSDTLEESSPIAAIFDTENLEKISITEGIERGIVDSITGQRLLEAQACTGGIIHPTTGQKLSLQDAVSQGVIDQDMATRLKPAQKAFIGFEGVKGKKKMSAAEAVKEKWLPYEAGQRFLEFQYLTGGLVDPEVHGRISTEEAIRKGFIDGRAAQRLQDTSSYAKILTCPKTKLKISYKDAINRSMVEDITGLRLLEAASVSSKGLPSPYNMSSAPGSRSGSRSGSRSGSRSGSRSGSRRGSFDATGNSSYSYSYSFSSSSIGH.

Positions 1-584 (MSCNGGSHPR…DYMKTIADLE (584 aa)) are interaction with PKP1, JUP, PKP2. The segment at 1–1056 (MSCNGGSHPR…ANSENCNKNK (1056 aa)) is globular 1. Serine 22 and serine 53 each carry phosphoserine. Tyrosine 56 is subject to Phosphotyrosine. Threonine 61 is subject to Phosphothreonine. 3 positions are modified to phosphoserine: serine 165, serine 166, and serine 176. 2 Spectrin repeats span residues 178-271 (SGWD…HLRQ) and 272-375 (LQNI…LKEN). The Spectrin 3a repeat unit spans residues 376-446 (AAYFQFFEEA…NLVNKSKKIV (71 aa)). In terms of domain architecture, SH3 spans 458-515 (NKPIILRALCDYKQDQKIVHKGDECILKDNNERSKWYVTGPGGVDMLVPSVGLIIPPP). A Spectrin 3b repeat occupies 516–545 (NPLAVDLSCKIEQYYEAILALWNQLYINMK). Spectrin repeat units lie at residues 546-627 (SLVS…IQLP), 654-769 (VIET…SLCT), and 770-883 (VRAL…DLEK). Residues 1018–1945 (SEMLKSLEDL…QREIDKLRQR (928 aa)) adopt a coiled-coil conformation. The segment at 1057-1945 (FLDQNLQKYQ…QREIDKLRQR (889 aa)) is central fibrous rod domain. Serine 1658, serine 1708, and serine 2024 each carry phosphoserine. The interval 1946-2871 (PYGSHRETQT…YSFSSSSIGH (926 aa)) is globular 2. The interval 1960–2208 (TVDTSKLVFD…LLLSVQKRSM (249 aa)) is 4.5 X 38 AA tandem repeats (Domain A). Plectin repeat units lie at residues 2009–2045 (QPFL…PEST), 2046–2083 (VMLL…FDDR), 2084–2121 (QQIY…RETG), 2122–2159 (MRLL…RDLY), 2163–2197 (NDPR…PHTG), 2198–2233 (LLLL…PSTV), 2251–2288 (KDFL…PGTA), 2289–2326 (LELL…IEFK), 2327–2364 (EKLL…KGHG), 2365–2402 (IRLL…EELS), 2406–2440 (SDPS…EETG), 2456–2493 (SQKN…YETF), 2507–2544 (TITG…RKFF), 2610–2647 (SDTL…SITG), 2648–2685 (QRLL…QDMA), 2724–2761 (QRFL…GRAA), and 2762–2799 (QRLQ…DITG). Phosphoserine occurs at positions 2207, 2209, and 2225. Residues 2244–2446 (DEVGERIKDF…EETGLCLLPL (203 aa)) are 4.5 X 38 AA tandem repeats (Domain B). The tract at residues 2609–2822 (FSDTLEESSP…LPSPYNMSSA (214 aa)) is 4.5 X 38 AA tandem repeats (Domain C). A phosphoserine mark is found at serine 2810 and serine 2815. Residues 2810–2823 (SKGLPSPYNMSSAP) show a composition bias toward polar residues. The disordered stretch occupies residues 2810 to 2871 (SKGLPSPYNM…YSFSSSSIGH (62 aa)). Tyrosine 2817 bears the Phosphotyrosine mark. Residues serine 2820, serine 2821, and serine 2825 each carry the phosphoserine modification. The segment at 2824–2847 (GSRSGSRSGSRSGSRSGSRSGSRR) is 6 X 4 AA tandem repeats of G-S-R-[SR]. Positions 2824–2847 (GSRSGSRSGSRSGSRSGSRSGSRR) are enriched in low complexity. Arginine 2826 and arginine 2847 each carry omega-N-methylarginine. The residue at position 2849 (serine 2849) is a Phosphoserine. Threonine 2853 carries the phosphothreonine modification. Over residues 2856–2871 (SSYSYSYSFSSSSIGH) the composition is skewed to low complexity. Serine 2868 is modified (phosphoserine).

Belongs to the plakin or cytolinker family. In terms of assembly, homodimer. Interacts with COL17A1 (via cytoplasmic region). Interacts with DSC2. Interacts with PKP2. Interacts with PKP1. Interacts weakly with TMEM65. Post-translationally, phosphorylation at Ser-2849 increases association with intermediate filament cytokeratin, potentially facilitating interaction between desmosome junctions and intermediate filament architecture. In terms of tissue distribution, expressed in oral mucosa (at protein level). Expressed in arrector pili muscle (at protein level). Expressed in the heart in the heart (at protein level). As to expression, apparently an obligate constituent of all desmosomes. Resides predominantly in tissues and cells of stratified origin.

The protein resides in the cell junction. It is found in the desmosome. The protein localises to the cell membrane. Its subcellular location is the cytoplasm. In terms of biological role, major high molecular weight protein of desmosomes. Regulates profibrotic gene expression in cardiomyocytes via activation of the MAPK14/p38 MAPK signaling cascade and increase in TGFB1 protein abundance. This is Desmoplakin (DSP) from Homo sapiens (Human).